Here is a 341-residue protein sequence, read N- to C-terminus: Homeobox protein mls-2 (341 aa).

2 disordered regions span residues 1–78 (MPTS…DSTN) and 139–209 (SNPD…TVFS). Polar residues predominate over residues 64–78 (TTQSSPSASSEDSTN). Over residues 153–166 (KDEKSEGKDGETRD) the composition is skewed to basic and acidic residues. A DNA-binding region (homeobox) is located at residues 201–260 (KKKTRTVFSRSQVSQLEMMFECKRYLSSQERSNLAQKLHLTETQVKIWFQNRRNKFKRQA).

It belongs to the HMX homeobox family. As to expression, expressed in a subset of head neurons, including AIM and ASK (at protein level).

The protein localises to the nucleus. Functionally, transcription factor that binds to the promoter of target genes. Regulates fate specification and/or differentiation of multiple cell types arising from the embryonic mesodermal (M) lineage and the ABp(l/r)paa precursors. In the postembryonic M lineage, regulates cleavage orientation, cell proliferation and cell fate specification. Regulates hlh-1 expression to specify coelomocyte fate in the mesodermal (M) lineage. In AWC neurons, initiates expression of ceh-36, leading to the expression of terminal differentiation genes. Regulates ventral cephalic sheath (CEPsh) glia differentiation and expression of transcription factor hlh-17 in CEPsh glia. Promotes terminal differentiation and morphogenesis of the epithelial duct and pore cells. In the duct cell, cooperates with the EGF-Ras-ERK pathway in turning on the terminal differentiation gene lin-48. The polypeptide is Homeobox protein mls-2 (Caenorhabditis elegans).